We begin with the raw amino-acid sequence, 189 residues long: GTPase NRas (189 aa).

Residues 10–18 (GAGGVGKSA) and 29–30 (VD) contribute to the GTP site. An Effector region motif is present at residues 32-40 (YDPTIEDSY). 57 to 61 (DTAGQ) provides a ligand contact to GTP. Residue serine 89 is modified to Phosphoserine. Residue 116–119 (NKCD) participates in GTP binding. The segment at 166–185 (YRMKKLNSNDDGTQGCMGLP) is hypervariable region. Lysine 170 participates in a covalent cross-link: Glycyl lysine isopeptide (Lys-Gly) (interchain with G-Cter in ubiquitin). The S-palmitoyl cysteine moiety is linked to residue cysteine 181. Cysteine 186 carries S-farnesyl cysteine lipidation. The propeptide at 187 to 189 (VVM) is removed in mature form.

It belongs to the small GTPase superfamily. Ras family. As to quaternary structure, interacts (active GTP-bound form preferentially) with RGS14. Interacts (active GTP-bound form) with RASSF7. Interacts (active GTP-bound form) with both SHOC2 and PP1c (all isoforms) to form a tertiary complex; SHOC2 and PP1c preferably bind M-Ras/MRAS, but they also bind K-Ras/KRAS, N-Ras/NRAS and H-Ras/HRAS. In terms of processing, palmitoylated by the ZDHHC9-GOLGA7 complex. Depalmitoylated by ABHD17A, ABHD17B and ABHD17C. A continuous cycle of de- and re-palmitoylation regulates rapid exchange between plasma membrane and Golgi. Acetylation at Lys-104 prevents interaction with guanine nucleotide exchange factors (GEFs). Post-translationally, ubiquitinated by the BCR(LZTR1) E3 ubiquitin ligase complex at Lys-170 in a non-degradative manner, leading to inhibit Ras signaling by decreasing Ras association with membranes. In terms of processing, phosphorylation at Ser-89 enhances NRAS association with its downstream effectors.

The protein localises to the cell membrane. The protein resides in the golgi apparatus membrane. It catalyses the reaction GTP + H2O = GDP + phosphate + H(+). With respect to regulation, alternates between an inactive form bound to GDP and an active form bound to GTP. Activated by a guanine nucleotide-exchange factor (GEF) and inactivated by a GTPase-activating protein (GAP). In terms of biological role, ras proteins bind GDP/GTP and possess intrinsic GTPase activity. The chain is GTPase NRas (NRAS) from Cavia porcellus (Guinea pig).